Reading from the N-terminus, the 73-residue chain is Antimicrobial peptide lumbricin-PG (73 aa).

Positions 1-14 are cleaved as a signal peptide; that stretch reads MLLTISDFLFLSLT. The segment at 25 to 48 is disordered; sequence RPWSDRKNNYSGPQFTYPPEKAPP.

The protein localises to the secreted. Its function is as follows. Displays antimicrobial activity against the Gram-positive bacterium S.aureus ATCC 2592, the Gram-negative bacteria E.coli ATCC 25922 and P.aeruginosa ATCC 27853, and the fungus C.albicans ATCC 2002. Displays stronger activity against P.aeruginosa and S.aureus than E.coli. Displays very weak hemolytic activity. This is Antimicrobial peptide lumbricin-PG from Metaphire guillelmi (Earthworm).